The sequence spans 234 residues: Leucyl/phenylalanyl-tRNA--protein transferase (234 aa).

This sequence belongs to the L/F-transferase family.

The protein localises to the cytoplasm. The catalysed reaction is N-terminal L-lysyl-[protein] + L-leucyl-tRNA(Leu) = N-terminal L-leucyl-L-lysyl-[protein] + tRNA(Leu) + H(+). It carries out the reaction N-terminal L-arginyl-[protein] + L-leucyl-tRNA(Leu) = N-terminal L-leucyl-L-arginyl-[protein] + tRNA(Leu) + H(+). The enzyme catalyses L-phenylalanyl-tRNA(Phe) + an N-terminal L-alpha-aminoacyl-[protein] = an N-terminal L-phenylalanyl-L-alpha-aminoacyl-[protein] + tRNA(Phe). Functions in the N-end rule pathway of protein degradation where it conjugates Leu, Phe and, less efficiently, Met from aminoacyl-tRNAs to the N-termini of proteins containing an N-terminal arginine or lysine. This chain is Leucyl/phenylalanyl-tRNA--protein transferase, found in Shigella boydii serotype 18 (strain CDC 3083-94 / BS512).